Consider the following 170-residue polypeptide: Ribosome maturation factor RimM (170 aa).

In terms of domain architecture, PRC barrel spans 96 to 169 (EGEFYACDVE…VVQLATLEGL (74 aa)).

The protein belongs to the RimM family. Binds ribosomal protein uS19.

The protein localises to the cytoplasm. An accessory protein needed during the final step in the assembly of 30S ribosomal subunit, possibly for assembly of the head region. Essential for efficient processing of 16S rRNA. May be needed both before and after RbfA during the maturation of 16S rRNA. It has affinity for free ribosomal 30S subunits but not for 70S ribosomes. The chain is Ribosome maturation factor RimM from Sorangium cellulosum (strain So ce56) (Polyangium cellulosum (strain So ce56)).